The chain runs to 1010 residues: DENN domain-containing protein 1A (1010 aa).

The region spanning 13 to 143 is the uDENN domain; sequence FEVYIEVNRP…HGHPIPEPGT (131 aa). A cDENN domain is found at 160–296; sequence ELPSIPENRN…VVSALKNRIR (137 aa). One can recognise a dDENN domain in the interval 298–375; the sequence is MSTTTGDGVA…DGRLDLLNSG (78 aa). The FXDXF motif signature appears at 378–382; the sequence is FSDVF. The tract at residues 455-554 is disordered; that stretch reads GFSTATEEPL…EATVKEPQST (100 aa). Basic and acidic residues predominate over residues 472–482; the sequence is IEKKRGEERRP. Positions 493–502 are enriched in basic residues; it reads PRPHVPRRPK. Polar residues predominate over residues 509–524; sequence SRTTAGSSPDQPQQYR. Basic and acidic residues predominate over residues 538 to 548; the sequence is SPEKDSSEATV. The short motif at 560 to 569 is the Clathrin box element; that stretch reads SLLEDIFSNL.

The protein localises to the cytoplasmic vesicle. The protein resides in the clathrin-coated vesicle membrane. It is found in the presynaptic cell membrane. Functionally, guanine nucleotide exchange factor (GEF) regulating clathrin-mediated endocytosis through RAB35 activation. Promotes the exchange of GDP to GTP, converting inactive GDP-bound RAB35 into its active GTP-bound form. Regulates clathrin-mediated endocytosis of synaptic vesicles and mediates exit from early endosomes. Binds phosphatidylinositol-phosphates (PtdInsPs), with some preference for PtdIns(3)P. In Xenopus laevis (African clawed frog), this protein is DENN domain-containing protein 1A (dennd1a).